The primary structure comprises 471 residues: Alkaline phosphatase (471 aa).

The first 21 residues, 1 to 21 (MKQSTIALALLPLLFTPVTKA), serve as a signal peptide directing secretion. Residue D73 coordinates Mg(2+). D73 contributes to the Zn(2+) binding site. The active-site Phosphoserine intermediate is S124. Positions 175 and 177 each coordinate Mg(2+). 2 disulfides stabilise this stretch: C190–C200 and C308–C358. E344 is a Mg(2+) binding site. Residues D349, H353, D391, H392, and H434 each contribute to the Zn(2+) site.

It belongs to the alkaline phosphatase family. As to quaternary structure, isozymes 1 and 3 are a dimer of identical chains, isozyme 2 is a dimer of heterogeneous chains, one of each of the subunits from isozymes 1 and 3. The cofactor is Mg(2+). Zn(2+) is required as a cofactor.

Its subcellular location is the periplasm. The catalysed reaction is a phosphate monoester + H2O = an alcohol + phosphate. This is Alkaline phosphatase (phoA) from Escherichia coli (strain K12).